The chain runs to 853 residues: Wolframin (853 aa).

The interval 139–179 is disordered; sequence KQLERKMRRIYNLQRKRRRRDDDRSSSSSEGEQEPECEPLE. A compositionally biased stretch (basic residues) spans 144 to 157; the sequence is KMRRIYNLQRKRRR. Positions 169 to 179 are enriched in acidic residues; sequence GEQEPECEPLE. The next 10 membrane-spanning stretches (helical) occupy residues 238–258, 259–279, 285–305, 347–367, 373–393, 446–466, 473–493, 513–533, 545–565, and 572–592; these read MIFHPLIFFTLFYHRLLNLIV, SIPNVIPLSVRCSVLVAISWW, LPLVSYYLSLGIMIWATCKML, LYFFCAFICNLIVYPLVTDAW, LTIISGALTFITMCVSMYASS, FCLNCRTALYLFIPVLLIMMA, GVYTFLIPHCVTLSWLQVCIA, IVLFLPLFGIVALLVPVFVAI, WGSTALACGLVVVLSCILALN, and ITMLQLITAITTACLLVLPYM. N-linked (GlcNAc...) asparagine glycans are attached at residues Asn694 and Asn769.

In terms of tissue distribution, detected in adult brain.

It localises to the membrane. The protein resides in the endoplasmic reticulum. Its subcellular location is the mitochondrion. Its function is as follows. Participates in the regulation of cellular Ca(2+) homeostasis, at least partly, by modulating the filling state of the endoplasmic reticulum Ca(2+) store. In neurons and glial cells, has a role in maintaining neuronal function and integrity during aging. This chain is Wolframin, found in Drosophila melanogaster (Fruit fly).